Here is a 141-residue protein sequence, read N- to C-terminus: Hemoglobin subunit alpha-D (141 aa).

One can recognise a Globin domain in the interval 1-141 (MLNHDEKQLI…VSAVLAEKYR (141 aa)). Heme b is bound by residues histidine 58 and histidine 87.

This sequence belongs to the globin family. In terms of assembly, heterotetramer of two alpha-D chains and two beta chains. Red blood cells.

Involved in oxygen transport from the lung to the various peripheral tissues. The chain is Hemoglobin subunit alpha-D (HBAD) from Chrysemys picta bellii (Western painted turtle).